The sequence spans 313 residues: Ribosomal RNA small subunit methyltransferase H (313 aa).

Residues 35–37, Asp55, Phe79, Asp101, and Gln108 each bind S-adenosyl-L-methionine; that span reads GGH.

It belongs to the methyltransferase superfamily. RsmH family.

It localises to the cytoplasm. It catalyses the reaction cytidine(1402) in 16S rRNA + S-adenosyl-L-methionine = N(4)-methylcytidine(1402) in 16S rRNA + S-adenosyl-L-homocysteine + H(+). Its function is as follows. Specifically methylates the N4 position of cytidine in position 1402 (C1402) of 16S rRNA. The protein is Ribosomal RNA small subunit methyltransferase H of Salmonella typhi.